The following is a 208-amino-acid chain: Phosphoheptose isomerase (208 aa).

The region spanning 38–200 (MALTLARGRK…LFENVLALQP (163 aa)) is the SIS domain. A substrate-binding site is contributed by 53 to 55 (NGG). Zn(2+) contacts are provided by histidine 62 and glutamate 66. Residues glutamate 66, 95–96 (ND), 121–123 (STS), serine 126, and glutamine 173 each bind substrate. Positions 173 and 181 each coordinate Zn(2+).

Belongs to the SIS family. GmhA subfamily. In terms of assembly, homotetramer. Requires Zn(2+) as cofactor.

The protein localises to the cytoplasm. It catalyses the reaction 2 D-sedoheptulose 7-phosphate = D-glycero-alpha-D-manno-heptose 7-phosphate + D-glycero-beta-D-manno-heptose 7-phosphate. The protein operates within carbohydrate biosynthesis; D-glycero-D-manno-heptose 7-phosphate biosynthesis; D-glycero-alpha-D-manno-heptose 7-phosphate and D-glycero-beta-D-manno-heptose 7-phosphate from sedoheptulose 7-phosphate: step 1/1. Catalyzes the isomerization of sedoheptulose 7-phosphate in D-glycero-D-manno-heptose 7-phosphate. This is Phosphoheptose isomerase from Nitratidesulfovibrio vulgaris (strain DSM 19637 / Miyazaki F) (Desulfovibrio vulgaris).